A 75-amino-acid polypeptide reads, in one-letter code: MPQISRYSDQQVEQLLSELTNVLESHKAPVDLSLMVLGNMVTNLINSSVAPAQRQAIARSFAQALQSSINDDPAH.

Belongs to the UPF0352 family.

This is UPF0352 protein KPN78578_25810 from Klebsiella pneumoniae subsp. pneumoniae (strain ATCC 700721 / MGH 78578).